The sequence spans 154 residues: Protein-export protein SecB (154 aa).

It belongs to the SecB family. As to quaternary structure, homotetramer, a dimer of dimers. One homotetramer interacts with 1 SecA dimer.

It localises to the cytoplasm. In terms of biological role, one of the proteins required for the normal export of preproteins out of the cell cytoplasm. It is a molecular chaperone that binds to a subset of precursor proteins, maintaining them in a translocation-competent state. It also specifically binds to its receptor SecA. The chain is Protein-export protein SecB from Vibrio parahaemolyticus serotype O3:K6 (strain RIMD 2210633).